The sequence spans 368 residues: tRNA-specific 2-thiouridylase MnmA (368 aa).

ATP contacts are provided by residues 11-18 (GMSGGVDS) and M37. The tract at residues 97-99 (NPD) is interaction with target base in tRNA. The Nucleophile role is filled by C102. C102 and C199 form a disulfide bridge. Position 127 (G127) interacts with ATP. Residues 149–151 (KDQ) are interaction with tRNA. C199 (cysteine persulfide intermediate) is an active-site residue. The tract at residues 311–312 (RY) is interaction with tRNA.

The protein belongs to the MnmA/TRMU family. In terms of assembly, interacts with TusE.

It is found in the cytoplasm. The catalysed reaction is S-sulfanyl-L-cysteinyl-[protein] + uridine(34) in tRNA + AH2 + ATP = 2-thiouridine(34) in tRNA + L-cysteinyl-[protein] + A + AMP + diphosphate + H(+). In terms of biological role, catalyzes the 2-thiolation of uridine at the wobble position (U34) of tRNA(Lys), tRNA(Glu) and tRNA(Gln), leading to the formation of s(2)U34, the first step of tRNA-mnm(5)s(2)U34 synthesis. Sulfur is provided by IscS, via a sulfur-relay system. Binds ATP and its substrate tRNAs. The protein is tRNA-specific 2-thiouridylase MnmA of Escherichia coli O6:H1 (strain CFT073 / ATCC 700928 / UPEC).